The primary structure comprises 358 residues: 2'-5'-oligoadenylate synthase 1A (358 aa).

Positions 14-61 are interaction with dsRNA; the sequence is DKFIEVYLLPNTSFRDDVKSAINVLCDFLKERCFRDTVHPVRVSKVVK. Residue serine 64 coordinates ATP. Aspartate 76, aspartate 78, and aspartate 149 together coordinate Mg(2+). The tract at residues 201–211 is interaction with dsRNA; the sequence is QRPTKLKSLIR. Residues arginine 211, lysine 214, and glutamine 231 each coordinate ATP.

This sequence belongs to the 2-5A synthase family. As to quaternary structure, monomer. Homotetramer. Interacts with OAS1D. Mg(2+) is required as a cofactor.

It localises to the cytoplasm. Its subcellular location is the mitochondrion. The protein localises to the nucleus. The protein resides in the microsome. It is found in the endoplasmic reticulum. It catalyses the reaction 3 ATP = 5'-triphosphoadenylyl-(2'-&gt;5')-adenylyl-(2'-&gt;5')-adenosine + 2 diphosphate. Produced as a latent enzyme which is activated by dsRNA generated during the course of viral infection. The dsRNA activator must be at least 15 nucleotides long, and no modification of the 2'-hydroxyl group is tolerated. ssRNA or dsDNA do not act as activators. Functionally, interferon-induced, dsRNA-activated antiviral enzyme which plays a critical role in cellular innate antiviral response. In addition, it may also play a role in other cellular processes such as apoptosis, cell growth, differentiation and gene regulation. Synthesizes higher oligomers of 2'-5'-oligoadenylates (2-5A) from ATP which then bind to the inactive monomeric form of ribonuclease L (RNase L) leading to its dimerization and subsequent activation. Activation of RNase L leads to degradation of cellular as well as viral RNA, resulting in the inhibition of protein synthesis, thus terminating viral replication. Can mediate the antiviral effect via the classical RNase L-dependent pathway or an alternative antiviral pathway independent of RNase L. The protein is 2'-5'-oligoadenylate synthase 1A (Oas1a) of Rattus norvegicus (Rat).